The sequence spans 257 residues: Imidazole glycerol phosphate synthase subunit HisF (257 aa).

Catalysis depends on residues Asp-11 and Asp-130.

This sequence belongs to the HisA/HisF family. As to quaternary structure, heterodimer of HisH and HisF.

The protein localises to the cytoplasm. The enzyme catalyses 5-[(5-phospho-1-deoxy-D-ribulos-1-ylimino)methylamino]-1-(5-phospho-beta-D-ribosyl)imidazole-4-carboxamide + L-glutamine = D-erythro-1-(imidazol-4-yl)glycerol 3-phosphate + 5-amino-1-(5-phospho-beta-D-ribosyl)imidazole-4-carboxamide + L-glutamate + H(+). Its pathway is amino-acid biosynthesis; L-histidine biosynthesis; L-histidine from 5-phospho-alpha-D-ribose 1-diphosphate: step 5/9. Its function is as follows. IGPS catalyzes the conversion of PRFAR and glutamine to IGP, AICAR and glutamate. The HisF subunit catalyzes the cyclization activity that produces IGP and AICAR from PRFAR using the ammonia provided by the HisH subunit. In Shewanella woodyi (strain ATCC 51908 / MS32), this protein is Imidazole glycerol phosphate synthase subunit HisF.